The chain runs to 781 residues: Penicillin-binding protein 1B (781 aa).

The segment at 151-322 (FRLAPKLIAM…SLYNPWRNPQ (172 aa)) is transglycosylase. Catalysis depends on Glu188, which acts as the Proton donor; for transglycosylase activity. Residues 415–702 (SQLQLKMKNP…ALQIYKDYLN (288 aa)) form a transpeptidase region. The Acyl-ester intermediate; for transpeptidase activity role is filled by Ser466. A compositionally biased stretch (low complexity) spans 749–768 (ETSSPSLTPTTETETPPQES). Residues 749-781 (ETSSPSLTPTTETETPPQESLWDVLDNPNPPAQ) are disordered.

In the N-terminal section; belongs to the glycosyltransferase 51 family. This sequence in the C-terminal section; belongs to the transpeptidase family.

It localises to the cell inner membrane. The catalysed reaction is [GlcNAc-(1-&gt;4)-Mur2Ac(oyl-L-Ala-gamma-D-Glu-L-Lys-D-Ala-D-Ala)](n)-di-trans,octa-cis-undecaprenyl diphosphate + beta-D-GlcNAc-(1-&gt;4)-Mur2Ac(oyl-L-Ala-gamma-D-Glu-L-Lys-D-Ala-D-Ala)-di-trans,octa-cis-undecaprenyl diphosphate = [GlcNAc-(1-&gt;4)-Mur2Ac(oyl-L-Ala-gamma-D-Glu-L-Lys-D-Ala-D-Ala)](n+1)-di-trans,octa-cis-undecaprenyl diphosphate + di-trans,octa-cis-undecaprenyl diphosphate + H(+). It catalyses the reaction Preferential cleavage: (Ac)2-L-Lys-D-Ala-|-D-Ala. Also transpeptidation of peptidyl-alanyl moieties that are N-acyl substituents of D-alanine.. The protein operates within cell wall biogenesis; peptidoglycan biosynthesis. In terms of biological role, cell wall formation. Synthesis of cross-linked peptidoglycan from the lipid intermediates. The enzyme has a penicillin-insensitive transglycosylase N-terminal domain (formation of linear glycan strands) and a penicillin-sensitive transpeptidase C-terminal domain (cross-linking of the peptide subunits). The protein is Penicillin-binding protein 1B (mrcB) of Haemophilus influenzae (strain ATCC 51907 / DSM 11121 / KW20 / Rd).